The following is an 840-amino-acid chain: Putative pentatricopeptide repeat-containing protein At1g31840 (840 aa).

PPR repeat units lie at residues Lys98 to Asn128, Asp145 to Ile179, Pro180 to Pro214, Gly216 to Val250, Gly251 to Pro284, Asn285 to Pro319, Asp320 to Leu354, Asp355 to Pro389, Asn390 to Pro424, Ser425 to Pro459, Asp460 to Leu494, Asn495 to Pro529, Asp530 to Pro564, Asp565 to Ala599, Asp600 to Pro634, Asp635 to Pro669, Asn670 to Pro704, Asn705 to Pro739, Ser740 to Pro774, and Asp775 to Pro809.

Belongs to the PPR family. P subfamily.

The sequence is that of Putative pentatricopeptide repeat-containing protein At1g31840 from Arabidopsis thaliana (Mouse-ear cress).